We begin with the raw amino-acid sequence, 475 residues long: Aspartate ammonia-lyase (475 aa).

L-aspartate is bound by residues Thr104, Ser143, Thr144, Asn145, Thr190, and His191. The interval 320 to 329 (GSSIMPGKVN) is SS loop. Catalysis depends on Ser321, which acts as the Proton acceptor. L-aspartate-binding residues include Ser322 and Lys327.

It belongs to the class-II fumarase/aspartase family. Aspartase subfamily. In terms of assembly, homotetramer.

The enzyme catalyses L-aspartate = fumarate + NH4(+). In terms of biological role, catalyzes the reversible conversion of L-aspartate to fumarate and ammonia. The chain is Aspartate ammonia-lyase from Bacillus subtilis (strain 168).